Consider the following 499-residue polypeptide: DNA-directed RNA polymerase subunit Rpo2N (499 aa).

It belongs to the RNA polymerase beta chain family. As to quaternary structure, part of the RNA polymerase complex.

It is found in the cytoplasm. The catalysed reaction is RNA(n) + a ribonucleoside 5'-triphosphate = RNA(n+1) + diphosphate. DNA-dependent RNA polymerase (RNAP) catalyzes the transcription of DNA into RNA using the four ribonucleoside triphosphates as substrates. The Rpo2 subunit (Rpo2N and Rpo2C in this organism) is implicated in DNA promoter recognition and in nucleotide binding. The polypeptide is DNA-directed RNA polymerase subunit Rpo2N (Methanococcus vannielii (strain ATCC 35089 / DSM 1224 / JCM 13029 / OCM 148 / SB)).